Consider the following 424-residue polypeptide: MLDIKFLRTNFEEVKAKLQHRGEDLTDFGRFEELDTRRRELLVQTEELKSKRNEVSQQISVLKREKKDAEALILEMREVGEKVKDFDNELRTVEEDLERLMLSIPNIPHESAPVGETEDDNVVARTWGEVKEFTFEPKPHWDLATDLGILDFERAGKVTGSRFVFYKGAGARLERALISFMLDLHTDEHGYEEVLPPYMVNRASMTGTGQLPKFEEDAFRIESEDYFLIPTAEVPVTNMHRDEILNKEQLPIRYAAFSSCFRSEAGSAGRDTRGLIRQHQFNKVELVKFVKPEDSYEELEKLTNDAERVLQLLELPYRVMSMCTGDLGFTAAKKYDIEVWIPSYGTYREISSCSNFEAFQARRANIRFRREPNGKPEHVHTLNGSGLAIGRTVAAILENYQQEDGTIIIPEVLRPYMGGKTVIK.

231–233 (TAE) contributes to the L-serine binding site. Residue 262 to 264 (RSE) coordinates ATP. E285 provides a ligand contact to L-serine. ATP is bound at residue 349 to 352 (EISS). S385 is a binding site for L-serine.

Belongs to the class-II aminoacyl-tRNA synthetase family. Type-1 seryl-tRNA synthetase subfamily. In terms of assembly, homodimer. The tRNA molecule binds across the dimer.

The protein localises to the cytoplasm. It catalyses the reaction tRNA(Ser) + L-serine + ATP = L-seryl-tRNA(Ser) + AMP + diphosphate + H(+). It carries out the reaction tRNA(Sec) + L-serine + ATP = L-seryl-tRNA(Sec) + AMP + diphosphate + H(+). It participates in aminoacyl-tRNA biosynthesis; selenocysteinyl-tRNA(Sec) biosynthesis; L-seryl-tRNA(Sec) from L-serine and tRNA(Sec): step 1/1. Functionally, catalyzes the attachment of serine to tRNA(Ser). Is also able to aminoacylate tRNA(Sec) with serine, to form the misacylated tRNA L-seryl-tRNA(Sec), which will be further converted into selenocysteinyl-tRNA(Sec). This is Serine--tRNA ligase from Bacillus cereus (strain G9842).